We begin with the raw amino-acid sequence, 122 residues long: Large ribosomal subunit protein uL14 (122 aa).

It belongs to the universal ribosomal protein uL14 family. Part of the 50S ribosomal subunit. Forms a cluster with proteins L3 and L19. In the 70S ribosome, L14 and L19 interact and together make contacts with the 16S rRNA in bridges B5 and B8.

Its function is as follows. Binds to 23S rRNA. Forms part of two intersubunit bridges in the 70S ribosome. The protein is Large ribosomal subunit protein uL14 of Methylorubrum populi (strain ATCC BAA-705 / NCIMB 13946 / BJ001) (Methylobacterium populi).